Consider the following 231-residue polypeptide: Ribonuclease P protein component 3 (231 aa).

Belongs to the eukaryotic/archaeal RNase P protein component 3 family. In terms of assembly, consists of a catalytic RNA component and at least 4-5 protein subunits.

Its subcellular location is the cytoplasm. It catalyses the reaction Endonucleolytic cleavage of RNA, removing 5'-extranucleotides from tRNA precursor.. Its function is as follows. Part of ribonuclease P, a protein complex that generates mature tRNA molecules by cleaving their 5'-ends. The protein is Ribonuclease P protein component 3 of Methanococcus vannielii (strain ATCC 35089 / DSM 1224 / JCM 13029 / OCM 148 / SB).